A 258-amino-acid polypeptide reads, in one-letter code: ER membrane protein complex subunit 3 (258 aa).

Helical transmembrane passes span 8–28 (PALR…IGIL), 123–143 (VVPQ…FILL), and 173–193 (SISW…LLLG).

This sequence belongs to the EMC3 family.

It localises to the cytoplasm. Its subcellular location is the membrane. This Schizosaccharomyces pombe (strain 972 / ATCC 24843) (Fission yeast) protein is ER membrane protein complex subunit 3.